We begin with the raw amino-acid sequence, 215 residues long: 3-demethoxyubiquinol 3-hydroxylase (215 aa).

Residues E64, E94, H97, E146, E178, and H181 each coordinate Fe cation.

It belongs to the COQ7 family. It depends on Fe cation as a cofactor.

The protein localises to the cell membrane. The catalysed reaction is a 5-methoxy-2-methyl-3-(all-trans-polyprenyl)benzene-1,4-diol + AH2 + O2 = a 3-demethylubiquinol + A + H2O. It participates in cofactor biosynthesis; ubiquinone biosynthesis. Its function is as follows. Catalyzes the hydroxylation of 2-nonaprenyl-3-methyl-6-methoxy-1,4-benzoquinol during ubiquinone biosynthesis. The protein is 3-demethoxyubiquinol 3-hydroxylase of Ectopseudomonas mendocina (strain ymp) (Pseudomonas mendocina).